The sequence spans 370 residues: Queuine tRNA-ribosyltransferase (370 aa).

The active-site Proton acceptor is Asp89. Substrate-binding positions include 89 to 93, Asp143, Gln187, and Gly214; that span reads DSGGF. Residues 245-251 form an RNA binding region; sequence GVGKPEN. Residue Asp264 is the Nucleophile of the active site. The interval 269-273 is RNA binding; important for wobble base 34 recognition; it reads TRNAR. Residues Cys302, Cys304, Cys307, and His333 each coordinate Zn(2+).

This sequence belongs to the queuine tRNA-ribosyltransferase family. In terms of assembly, homodimer. Within each dimer, one monomer is responsible for RNA recognition and catalysis, while the other monomer binds to the replacement base PreQ1. Zn(2+) is required as a cofactor.

It catalyses the reaction 7-aminomethyl-7-carbaguanine + guanosine(34) in tRNA = 7-aminomethyl-7-carbaguanosine(34) in tRNA + guanine. It participates in tRNA modification; tRNA-queuosine biosynthesis. Catalyzes the base-exchange of a guanine (G) residue with the queuine precursor 7-aminomethyl-7-deazaguanine (PreQ1) at position 34 (anticodon wobble position) in tRNAs with GU(N) anticodons (tRNA-Asp, -Asn, -His and -Tyr). Catalysis occurs through a double-displacement mechanism. The nucleophile active site attacks the C1' of nucleotide 34 to detach the guanine base from the RNA, forming a covalent enzyme-RNA intermediate. The proton acceptor active site deprotonates the incoming PreQ1, allowing a nucleophilic attack on the C1' of the ribose to form the product. After dissociation, two additional enzymatic reactions on the tRNA convert PreQ1 to queuine (Q), resulting in the hypermodified nucleoside queuosine (7-(((4,5-cis-dihydroxy-2-cyclopenten-1-yl)amino)methyl)-7-deazaguanosine). The sequence is that of Queuine tRNA-ribosyltransferase from Hamiltonella defensa subsp. Acyrthosiphon pisum (strain 5AT).